The chain runs to 362 residues: 3-dehydroquinate synthase (362 aa).

Residues 72–77, 106–110, 130–131, Lys-143, and Lys-152 contribute to the NAD(+) site; these read DGEAHK, GVIGD, and TT. 3 residues coordinate Zn(2+): Glu-185, His-248, and His-265.

Belongs to the sugar phosphate cyclases superfamily. Dehydroquinate synthase family. Requires Co(2+) as cofactor. The cofactor is Zn(2+). NAD(+) serves as cofactor.

It localises to the cytoplasm. The catalysed reaction is 7-phospho-2-dehydro-3-deoxy-D-arabino-heptonate = 3-dehydroquinate + phosphate. The protein operates within metabolic intermediate biosynthesis; chorismate biosynthesis; chorismate from D-erythrose 4-phosphate and phosphoenolpyruvate: step 2/7. In terms of biological role, catalyzes the conversion of 3-deoxy-D-arabino-heptulosonate 7-phosphate (DAHP) to dehydroquinate (DHQ). In Laribacter hongkongensis (strain HLHK9), this protein is 3-dehydroquinate synthase.